The following is a 545-amino-acid chain: MTTNYIFVTGGVVSSLGKGIAAASLAAILEARGLNVTIMKLDPYINVDPGTMSPIQHGEVFVTEDGAETDLDLGHYERFIRTKMSRRNNFTTGRIYSDVLRKERRGDYLGATVQVIPHITNAIKERVLEGGEGHDVVLVEIGGTVGDIESLPFLEAIRQLAVDIGREHALFMHLTLVPYLAAAGEVKTKPTQHSVKELLSIGIQPDILICRSDRAVPANERAKIALFCNVPEKAVISMKDVDSIYKIPGLLKSQGLDDYICKRFSLNCPEANLSEWEQVIYEEANPAGEVTIGMVGKYIELPDAYKSVIEALKHGGLKNRVTVNIKLIDSQDVETRGVEILKDLDAILIPGGFGYRGVEGKIATARYARENNIPYLGICLGMQVALIEFARNVAGMDNANSTEFVPDCKYPVVALITEWRDEDGNVEVRNEKSDLGGTMRLGAQQCQLSDDSLVRQLYGASTIVERHRHRYEVNNMLLKQIEAAGLRVAGRSGDAQLVEIIEVPNHPWFVACQFHPEFTSTPRDGHPLFAGFVKAANEHQKRQAK.

The tract at residues 1 to 266 (MTTNYIFVTG…DDYICKRFSL (266 aa)) is amidoligase domain. A CTP-binding site is contributed by S14. S14 serves as a coordination point for UTP. ATP-binding positions include 15-20 (SLGKGI) and D72. Positions 72 and 140 each coordinate Mg(2+). CTP is bound by residues 147-149 (DIE), 187-192 (KTKPTQ), and K223. UTP is bound by residues 187–192 (KTKPTQ) and K223. Residue 239-241 (KDV) participates in ATP binding. In terms of domain architecture, Glutamine amidotransferase type-1 spans 291-542 (TIGMVGKYIE…VKAANEHQKR (252 aa)). G352 provides a ligand contact to L-glutamine. The Nucleophile; for glutamine hydrolysis role is filled by C379. L-glutamine is bound by residues 380 to 383 (LGMQ), E403, and R470. Residues H515 and E517 contribute to the active site.

This sequence belongs to the CTP synthase family. In terms of assembly, homotetramer.

It carries out the reaction UTP + L-glutamine + ATP + H2O = CTP + L-glutamate + ADP + phosphate + 2 H(+). The enzyme catalyses L-glutamine + H2O = L-glutamate + NH4(+). The catalysed reaction is UTP + NH4(+) + ATP = CTP + ADP + phosphate + 2 H(+). It functions in the pathway pyrimidine metabolism; CTP biosynthesis via de novo pathway; CTP from UDP: step 2/2. With respect to regulation, allosterically activated by GTP, when glutamine is the substrate; GTP has no effect on the reaction when ammonia is the substrate. The allosteric effector GTP functions by stabilizing the protein conformation that binds the tetrahedral intermediate(s) formed during glutamine hydrolysis. Inhibited by the product CTP, via allosteric rather than competitive inhibition. Its function is as follows. Catalyzes the ATP-dependent amination of UTP to CTP with either L-glutamine or ammonia as the source of nitrogen. Regulates intracellular CTP levels through interactions with the four ribonucleotide triphosphates. This Salmonella newport (strain SL254) protein is CTP synthase.